Here is a 152-residue protein sequence, read N- to C-terminus: MDEQEIQRLVEEVSLQYFGMPFLHKAMFNSRLRTTGGRYLLNTHNIELNYRYYEMYGKEELVGIVKHELCHYHLHITGRGYKHRDKDFRELLKAVDAPRFCKRMVNAEKEKRVYVYECMECLLQYVRRRQINTKRYVCGKCKGKLNLIKKTS.

The SprT-like domain occupies 7 to 148 (QRLVEEVSLQ…GKCKGKLNLI (142 aa)). His-67 contacts Zn(2+). Residue Glu-68 is part of the active site. Residue His-71 participates in Zn(2+) binding.

This sequence belongs to the SprT family. Requires Zn(2+) as cofactor.

Its subcellular location is the cytoplasm. This Bacillus anthracis (strain A0248) protein is Protein SprT-like.